The primary structure comprises 207 residues: FMN-dependent NADH:quinone oxidoreductase (207 aa).

S10 serves as a coordination point for FMN.

This sequence belongs to the azoreductase type 1 family. As to quaternary structure, homodimer. FMN serves as cofactor.

The enzyme catalyses 2 a quinone + NADH + H(+) = 2 a 1,4-benzosemiquinone + NAD(+). The catalysed reaction is N,N-dimethyl-1,4-phenylenediamine + anthranilate + 2 NAD(+) = 2-(4-dimethylaminophenyl)diazenylbenzoate + 2 NADH + 2 H(+). In terms of biological role, quinone reductase that provides resistance to thiol-specific stress caused by electrophilic quinones. Functionally, also exhibits azoreductase activity. Catalyzes the reductive cleavage of the azo bond in aromatic azo compounds to the corresponding amines. The protein is FMN-dependent NADH:quinone oxidoreductase of Shouchella clausii (strain KSM-K16) (Alkalihalobacillus clausii).